The chain runs to 341 residues: Putative UPF0607 protein ENSP00000383783 (341 aa).

Over residues 75–101 (EVRAEEPKEATEVKDQVETQGQEDNKR) the composition is skewed to basic and acidic residues. 2 disordered regions span residues 75-115 (EVRA…TSSL) and 216-278 (GLLM…PPPA). The span at 234–245 (SSRSSPSRAASH) shows a compositional bias: low complexity.

It belongs to the UPF0607 family.

The polypeptide is Putative UPF0607 protein ENSP00000383783 (Homo sapiens (Human)).